The following is a 208-amino-acid chain: Ypt/Rab-type GTPase YPT7 (208 aa).

GTP is bound by residues 17–23, 33–40, Gly67, and 126–129; these read SGVGKTS, YSQQYKAT, and NKID. Positions 37–45 match the Effector region motif; it reads YKATIGADF. A Glycyl lysine isopeptide (Lys-Gly) (interchain with G-Cter in ubiquitin) cross-link involves residue Lys147. 158–160 provides a ligand contact to GTP; sequence SAK. Residues Cys206 and Cys208 are each lipidated (S-geranylgeranyl cysteine). Cys208 is modified (cysteine methyl ester).

The protein belongs to the small GTPase superfamily. Rab family. In terms of assembly, interacts with IVY1. Interacts with YIF1, YIP4 and YIP5. Interacts with the HOPS complex. Interacts with the class C-Vps complex. Interacts with VPS35. Interacts with VPS39. Interacts with the GDP dissociation inhibitor GDI1. Interacts with CCZ1.

It localises to the late endosome. The protein resides in the vacuole membrane. Its activity is regulated as follows. Rab activation is generally mediated by a guanine exchange factor (GEF), while inactivation through hydrolysis of bound GTP is catalyzed by a GTPase activating protein (GAP). YPT7 is activated by GEFs MON1-CCZ1 complex (MC1) and VAM6/VPS39, and inactivated by GAPs GYP7 and GYP1. Ypt/Rab-type GTPases are key regulators of membrane trafficking and intracellular vesicular transport. They act as molecular switches that convert between GTP-bound and GDP-bound states, and regulate virtually all steps of membrane traffic from the formation of the transport vesicle at the donor membrane to its fusion at the target membrane. In the GDP-bound state, Ypt proteins are predominantly cytosolic, solubilized through the interaction with a GDP dissociation inhibitor (GDI). In the GTP-bound state, the proteins are membrane bound and interact with specific effector proteins that select cargo, promote vesicle movement, or verify the correct site of fusion. Involved in regulation of vesicular protein transport in exo- and endocytosis. Involved in regulation of late endosome to vacuole trafficking and homotypic vacuole fusion, by interacting in its GTP-bound state on the donor membrane with the large multiprotein HOPS/class C-Vps tethering complex on the acceptor membrane. Involved in retromer assembly and cargo export, recognizing the cargo selection complex (CSC). GTP-bound YPT7 recruits CSC to vacuolar membranes via retromer subunit VPS35. Interacts with the HOPS complex subunit VPS39 independent of the HOPS complex at mitochondria-vacuole contact sites (vCLAMPs), providing a physical and metabolic interconnection between the endocytic pathway and mitochondria. The protein is Ypt/Rab-type GTPase YPT7 (YPT7) of Saccharomyces cerevisiae (strain ATCC 204508 / S288c) (Baker's yeast).